The primary structure comprises 320 residues: Mitochondrial thiamine pyrophosphate carrier (320 aa).

Solcar repeat units follow at residues asparagine 13–leucine 106, arginine 116–leucine 202, and asparagine 214–valine 309. Residues alanine 19–isoleucine 39 form a helical membrane-spanning segment. Position 51 is a phosphoserine (serine 51). 4 helical membrane-spanning segments follow: residues isoleucine 87 to valine 107, phenylalanine 122 to leucine 142, valine 173 to phenylalanine 193, and leucine 220 to phenylalanine 240. Residues lysine 241–valine 246 carry the Substrate recognition motif. A helical membrane pass occupies residues alanine 293–methionine 313.

It belongs to the mitochondrial carrier (TC 2.A.29) family. In terms of tissue distribution, expressed in all tissues examined except for placenta. Highest levels in colon, kidney, lung, testis, spleen, and brain.

It is found in the mitochondrion membrane. The enzyme catalyses thiamine phosphate(out) + thiamine diphosphate(in) = thiamine phosphate(in) + thiamine diphosphate(out). Functionally, mitochondrial transporter mediating uptake of thiamine diphosphate into mitochondria. It is not clear if the antiporter activity is affected by the membrane potential or by the proton electrochemical gradient. This is Mitochondrial thiamine pyrophosphate carrier from Homo sapiens (Human).